Consider the following 279-residue polypeptide: UTP--glucose-1-phosphate uridylyltransferase (279 aa).

The protein belongs to the UDPGP type 2 family.

The catalysed reaction is alpha-D-glucose 1-phosphate + UTP + H(+) = UDP-alpha-D-glucose + diphosphate. May play a role in stationary phase survival. This is UTP--glucose-1-phosphate uridylyltransferase (galU) from Pseudomonas aeruginosa (strain ATCC 15692 / DSM 22644 / CIP 104116 / JCM 14847 / LMG 12228 / 1C / PRS 101 / PAO1).